We begin with the raw amino-acid sequence, 530 residues long: Zinc finger protein ZIC 4 (530 aa).

Composition is skewed to basic residues over residues histidine 31 to proline 40 and asparagine 97 to alanine 113. 2 disordered regions span residues histidine 31–proline 50 and proline 87–serine 138. Residues leucine 284 to histidine 317 form a C2H2-type 1; atypical zinc finger. The segment at histidine 326–histidine 353 adopts a C2H2-type 2; atypical zinc-finger fold. C2H2-type zinc fingers lie at residues phenylalanine 359–histidine 383, phenylalanine 389–histidine 413, and tyrosine 419–histidine 443. Residues histidine 432–phenylalanine 530 form a disordered region. Residues serine 435–cysteine 444 show a composition bias toward basic residues. 2 stretches are compositionally biased toward low complexity: residues serine 455–serine 467 and threonine 474–glutamine 485. The segment covering serine 520 to phenylalanine 530 has biased composition (polar residues).

The protein belongs to the GLI C2H2-type zinc-finger protein family. As to expression, at mid-gastrula stage (stage 11.5), weakly expressed in the prospective neural fold. Expressed in the neural plate border region at early neurula stage (stage 15) with strongest expression in the prospective regions of the hyoid and branchial crests. Expression in the dorsal central nervous system (CNS) continues through late neurula stage and early tail bud stages with expression strongest in the olfactory placode and expression levels increasing as development progresses. Becomes expressed in somites.

It localises to the nucleus. Functionally, may bind to DNA. Induces neural and neural crest differentiation. Does not induce anterior neural tissue. This chain is Zinc finger protein ZIC 4 (zic4), found in Xenopus laevis (African clawed frog).